The following is a 353-amino-acid chain: Photosystem II D2 protein (353 aa).

Thr-2 bears the N-acetylthreonine mark. Thr-2 carries the phosphothreonine modification. The helical transmembrane segment at 41 to 61 threads the bilayer; it reads CAYFSLGGWLTGTTFVTSWYT. His-118 is a binding site for chlorophyll a. The chain crosses the membrane as a helical span at residues 125 to 141; it reads GFMLRQFELARSVQLRP. 2 residues coordinate pheophytin a: Gln-130 and Asn-143. The chain crosses the membrane as a helical span at residues 153–166; sequence VFVSVFLIYPLGQS. His-198 lines the chlorophyll a pocket. A helical transmembrane segment spans residues 208–228; that stretch reads AALLCAIHGATVENTLFEDGD. 2 residues coordinate a plastoquinone: His-215 and Phe-262. His-215 contacts Fe cation. His-269 lines the Fe cation pocket. A helical transmembrane segment spans residues 279-295; the sequence is GLWMSAIGVVGLALNLR.

It belongs to the reaction center PufL/M/PsbA/D family. As to quaternary structure, PSII is composed of 1 copy each of membrane proteins PsbA, PsbB, PsbC, PsbD, PsbE, PsbF, PsbH, PsbI, PsbJ, PsbK, PsbL, PsbM, PsbT, PsbX, PsbY, PsbZ, Psb30/Ycf12, at least 3 peripheral proteins of the oxygen-evolving complex and a large number of cofactors. It forms dimeric complexes. The D1/D2 heterodimer binds P680, chlorophylls that are the primary electron donor of PSII, and subsequent electron acceptors. It shares a non-heme iron and each subunit binds pheophytin, quinone, additional chlorophylls, carotenoids and lipids. There is also a Cl(-1) ion associated with D1 and D2, which is required for oxygen evolution. The PSII complex binds additional chlorophylls, carotenoids and specific lipids. is required as a cofactor.

It is found in the plastid. Its subcellular location is the chloroplast thylakoid membrane. The catalysed reaction is 2 a plastoquinone + 4 hnu + 2 H2O = 2 a plastoquinol + O2. Functionally, photosystem II (PSII) is a light-driven water:plastoquinone oxidoreductase that uses light energy to abstract electrons from H(2)O, generating O(2) and a proton gradient subsequently used for ATP formation. It consists of a core antenna complex that captures photons, and an electron transfer chain that converts photonic excitation into a charge separation. The D1/D2 (PsbA/PsbD) reaction center heterodimer binds P680, the primary electron donor of PSII as well as several subsequent electron acceptors. D2 is needed for assembly of a stable PSII complex. In Chara vulgaris (Common stonewort), this protein is Photosystem II D2 protein.